A 640-amino-acid polypeptide reads, in one-letter code: MSNITILDEATANKIAAGEVVERPVSVVKELVENSLDAGANRISVELTQGGITGIKVVDNGYGMPAEDVQLCFLRHATSKIKRAEDLNSILTLGFRGEALPSIAAVSKVTLTTRTEDELAGTTMQIEGGYMQNVVPTGCPVGTIIEIKDLFFNTPARRKFLKTANAETSQVSDLITRLAMARPDVRFELRSGNRVLFSSPGTGSLKDTAAVIFGLDNVRSMLEIGYQGKLLSVAGLISKPVLTRASRHYQNFFINGRYIRSGFLSSILQQAYDTLIPAGRFPIAILHIDIDPTQVDVNVHPTKMEIRMAREGEIQEELLAALSDSLNVPTAITGLWEIMPGRTKNTATDQRAENLEVKPDSKEKELQPKESQHPRLVACDLPSGKIMPPRHDQEQLHFSSRRIAPVRGKNSLLPDEGSSINREEIPPVVDVKEQQLKENPNTYQPAETLGFPVLVPAGQVPPTYVLAHGEGGLYIIDQHAAHERVLYEKYLYLLGNYVEAQMLLEPLTLEIPHHEAQLIIKHIVDFNELGFILEHFGGDTFLLRGVPTNAITEPKEVFLDLLARLQENPSQKVEKNLVLDHLAAAMACRDAVKSGQHFSAVETKALLDGLARCQKPYTCPHGRPTLIQISQEELKKRFKR.

Positions 343–389 (TKNTATDQRAENLEVKPDSKEKELQPKESQHPRLVACDLPSGKIMPP) are disordered. The span at 350-373 (QRAENLEVKPDSKEKELQPKESQH) shows a compositional bias: basic and acidic residues.

It belongs to the DNA mismatch repair MutL/HexB family.

Its function is as follows. This protein is involved in the repair of mismatches in DNA. It is required for dam-dependent methyl-directed DNA mismatch repair. May act as a 'molecular matchmaker', a protein that promotes the formation of a stable complex between two or more DNA-binding proteins in an ATP-dependent manner without itself being part of a final effector complex. The chain is DNA mismatch repair protein MutL from Desulforamulus reducens (strain ATCC BAA-1160 / DSM 100696 / MI-1) (Desulfotomaculum reducens).